The primary structure comprises 388 residues: MKTAYFDCFSGISGDMVLGALLDLGLPLDVLSGELKKIAVSGYVLSAERERRGSIAGTRVRIDIEDQPARSYREIARLIGESALESPVKEKSLAVFEKLALAEARVHQVPPGDVHFHEVGALDSILDIVGAAIGLHHLGIERLCASRVPLGGGFVETRHGLLPLPAPATVLLLEGVPVYDNGIQRELTTPTGAAILAALAESFGPVPDMVVRSTGYGVGTHPCADPPNLLRVLVGEASPGLLRRRLLLIETSIDDMNPEFYGHVMERLFDAGALDVNLVPAQMKKNRPAVILRVLLEPALQAAVTEIVFRETTSLGVRIQEVDRVELPREIGEVDTPYGRCRVKWVRTPWGERRATPEYEDCKRIALEQGVPIRRIYEEVLAAAGRGQ.

Belongs to the LarC family.

The chain is Putative nickel insertion protein from Syntrophobacter fumaroxidans (strain DSM 10017 / MPOB).